The primary structure comprises 337 residues: Anthranilate phosphoribosyltransferase (337 aa).

Residues G79, 82 to 83 (GD), T87, 89 to 92 (NVST), 107 to 115 (KHGNRSVSS), and S119 contribute to the 5-phospho-alpha-D-ribose 1-diphosphate site. G79 lines the anthranilate pocket. Mg(2+) is bound at residue S91. N110 is a binding site for anthranilate. Residue R165 participates in anthranilate binding. Mg(2+) is bound by residues D223 and E224.

Belongs to the anthranilate phosphoribosyltransferase family. Homodimer. It depends on Mg(2+) as a cofactor.

It catalyses the reaction N-(5-phospho-beta-D-ribosyl)anthranilate + diphosphate = 5-phospho-alpha-D-ribose 1-diphosphate + anthranilate. It participates in amino-acid biosynthesis; L-tryptophan biosynthesis; L-tryptophan from chorismate: step 2/5. Catalyzes the transfer of the phosphoribosyl group of 5-phosphorylribose-1-pyrophosphate (PRPP) to anthranilate to yield N-(5'-phosphoribosyl)-anthranilate (PRA). The protein is Anthranilate phosphoribosyltransferase of Aeromonas salmonicida (strain A449).